We begin with the raw amino-acid sequence, 28 residues long: VFTHVLQPYPEIRPRFPLVGGWKTHYXV.

Belongs to the OST1 family. Component of the oligosaccharyltransferase (OST) complex.

The protein resides in the endoplasmic reticulum membrane. Its pathway is protein modification; protein glycosylation. In terms of biological role, subunit of the oligosaccharyl transferase (OST) complex that catalyzes the initial transfer of a defined glycan (Glc(3)Man(9)GlcNAc(2) in eukaryotes) from the lipid carrier dolichol-pyrophosphate to an asparagine residue within an Asn-X-Ser/Thr consensus motif in nascent polypeptide chains, the first step in protein N-glycosylation. N-glycosylation occurs cotranslationally and the complex associates with the Sec61 complex at the channel-forming translocon complex that mediates protein translocation across the endoplasmic reticulum (ER). All subunits are required for a maximal enzyme activity. This Gallus gallus (Chicken) protein is Dolichyl-diphosphooligosaccharide--protein glycosyltransferase subunit 1.